Here is a 373-residue protein sequence, read N- to C-terminus: Malate dehydrogenase, mitochondrial (373 aa).

NAD(+) is bound by residues 69-75 (GAAGGIG) and D95. R141 and R147 together coordinate substrate. NAD(+) contacts are provided by residues N154 and 177–179 (ISN). The substrate site is built by N179 and R213. Residue H237 is the Proton acceptor of the active site. M288 contributes to the NAD(+) binding site.

This sequence belongs to the LDH/MDH superfamily. MDH type 1 family. In terms of assembly, homodimer.

It localises to the mitochondrion matrix. It carries out the reaction (S)-malate + NAD(+) = oxaloacetate + NADH + H(+). This is Malate dehydrogenase, mitochondrial from Chlamydomonas reinhardtii (Chlamydomonas smithii).